We begin with the raw amino-acid sequence, 80 residues long: MPTKKNNFEEQLNSLEKIVTNLENGNVPLEDALKEFQEGVKISRELDKKLTSAEEIVAKLIDSDGTEHKLDPNNAAAPED.

Belongs to the XseB family. As to quaternary structure, heterooligomer composed of large and small subunits.

Its subcellular location is the cytoplasm. The enzyme catalyses Exonucleolytic cleavage in either 5'- to 3'- or 3'- to 5'-direction to yield nucleoside 5'-phosphates.. Its function is as follows. Bidirectionally degrades single-stranded DNA into large acid-insoluble oligonucleotides, which are then degraded further into small acid-soluble oligonucleotides. This is Exodeoxyribonuclease 7 small subunit from Lactobacillus helveticus (strain DPC 4571).